The following is a 211-amino-acid chain: MRVRKRKGAEKHLANNPHYVILNPEDAKGRWHDVFGNDRPIHIEVGSGKGGFITGMALKNPDINYIGIDIQLSVLSYALDKVLASEVPNVKLLRVDGSSLTNYFEDGEVDMMYLNFSDPWPKTKHEKRRLTYKDFLDTYKRILPEHGEIHFKTDNRGLFEYSLASFSQYGMTLRQIWLDLHASNYEGNVMTEYEEKFSNKGQVIYRVEANF.

S-adenosyl-L-methionine is bound by residues E44, D69, D96, and D118. The active site involves D118. K122 provides a ligand contact to substrate. An interaction with RNA region spans residues 124 to 129 (KHEKRR). Substrate is bound by residues D154 and 191–194 (TEYE).

This sequence belongs to the class I-like SAM-binding methyltransferase superfamily. TrmB family.

It carries out the reaction guanosine(46) in tRNA + S-adenosyl-L-methionine = N(7)-methylguanosine(46) in tRNA + S-adenosyl-L-homocysteine. It participates in tRNA modification; N(7)-methylguanine-tRNA biosynthesis. Catalyzes the formation of N(7)-methylguanine at position 46 (m7G46) in tRNA. This Streptococcus pyogenes serotype M18 (strain MGAS8232) protein is tRNA (guanine-N(7)-)-methyltransferase.